Consider the following 304-residue polypeptide: ATP phosphoribosyltransferase (304 aa).

This sequence belongs to the ATP phosphoribosyltransferase family.

It is found in the cytoplasm. It catalyses the reaction 1-(5-phospho-beta-D-ribosyl)-ATP + diphosphate = 5-phospho-alpha-D-ribose 1-diphosphate + ATP. It participates in amino-acid biosynthesis; L-histidine biosynthesis; L-histidine from 5-phospho-alpha-D-ribose 1-diphosphate: step 1/9. Catalyzes the condensation of ATP and 5-phosphoribose 1-diphosphate to form N'-(5'-phosphoribosyl)-ATP (PR-ATP). Has a crucial role in the pathway because the rate of histidine biosynthesis seems to be controlled primarily by regulation of the enzymatic activity. The protein is ATP phosphoribosyltransferase (HIS1) of Debaryomyces hansenii (strain ATCC 36239 / CBS 767 / BCRC 21394 / JCM 1990 / NBRC 0083 / IGC 2968) (Yeast).